The following is a 1630-amino-acid chain: Probable phosphoinositide phosphatase SAC9 (1630 aa).

The SAC domain occupies 147–527 (LTELDIDGKH…ADAVTGKSYY (381 aa)). Residues 456–467 (RFNCADSLDRTN) carry the Phosphatase catalytic core; degenerate motif. Positions 508–542 (APLPPGWEKRADAVTGKSYYIDHNTKTTTWSHPCP) constitute a WW domain.

Ubiquitous. Most abundant in the roots with lower expression levels throughout the leaves and shoot.

In terms of biological role, probable phosphoinositide phosphatase that could be involved in stress signaling. This Arabidopsis thaliana (Mouse-ear cress) protein is Probable phosphoinositide phosphatase SAC9 (SAC9).